The following is a 618-amino-acid chain: Grainyhead-like protein 1 homolog (618 aa).

The tract at residues 1–91 (MTQEYDNKRP…EVEHPEPDHS (91 aa)) is transcription activation. A compositionally biased stretch (basic and acidic residues) spans 74 to 92 (RRSSTAKPEVEHPEPDHSK). The disordered stretch occupies residues 74 to 94 (RRSSTAKPEVEHPEPDHSKRN). Threonine 208 is modified (phosphothreonine). Residues 248 to 474 (SGNNFEYTLE…DLDTQPVLFI (227 aa)) enclose the Grh/CP2 DB domain. Interaction with DNA stretches follow at residues 380–389 (TDFSSQKGVK) and 427–430 (RKIR).

This sequence belongs to the grh/CP2 family. Grainyhead subfamily. As to quaternary structure, binds DNA as homodimer. Homodimer, also forms heterodimers with GRHL2 or GRHL3. Methylation at Arg-9 and Lys-116 may be involved in regulating transcriptional activation. As to expression, isoform 1 is highly expressed in brain, pancreas, tonsil, placenta and kidney. Isoform 2 is highly expressed in brain and liver. Expressed at very low levels in non-steroidogenic cells.

The protein resides in the nucleus. In terms of biological role, transcription factor involved in epithelial development. Binds directly to the consensus DNA sequence 5'-AACCGGTT-3'. Important regulator of DSG1 in the context of hair anchorage and epidermal differentiation, participates in the maintenance of the skin barrier. There is no genetic interaction with GRHL3, nor functional cooperativity due to diverse target gene selectivity during epithelia development. May play a role in regulating glucose homeostasis and insulin signaling. Functionally, functions as a transcription activator. Its function is as follows. May function as a repressor in tissues where both isoform 1 and isoform 2 are expressed. The chain is Grainyhead-like protein 1 homolog from Homo sapiens (Human).